Reading from the N-terminus, the 766-residue chain is Serine/threonine-protein kinase tousled-like 1 (766 aa).

M1 carries the N-acetylmethionine modification. Residues 1 to 19 (MSVQSSSGSLEGPPSWSQL) show a composition bias toward polar residues. The disordered stretch occupies residues 1–197 (MSVQSSSGSL…SPSPTALAFG (197 aa)). Residues 20-33 (STSPTPGSAAAARS) show a composition bias toward low complexity. At T38 the chain carries Phosphothreonine. Residues 43-64 (RPREGAMDELHSLDPRRQELLE) show a composition bias toward basic and acidic residues. Phosphoserine is present on residues S54, S77, and S80. The segment covering 68 to 85 (TGVASGSTGSTGSCSVGA) has biased composition (low complexity). The segment covering 87–103 (ASTNNESSNHSFGSLGS) has biased composition (polar residues). The span at 105–121 (SDKESETPEKKQSESSR) shows a compositional bias: basic and acidic residues. Residues S134, S159, S174, and S176 each carry the phosphoserine modification. Over residues 170–192 (SPQNSHSHSTPSSSVRPNSPSPT) the composition is skewed to low complexity. Positions 230–281 (QDLEKKEGRIDDLLRANCDLRRQIDEQQKLLEKYKERLNKCISMSKKLLIEK) form a coiled coil. Residues 346–383 (LAKRKPPTANNSQAPSTNSEPKQRKNKAVNGAENDPFV) are disordered. Positions 353–365 (TANNSQAPSTNSE) are enriched in polar residues. The stretch at 397 to 445 (HEQEEIFKLRLGHLKKEEAEIQAELERLERVRNLHIRELKRINNEDNSQ) forms a coiled coil. The Protein kinase domain maps to 456-734 (YLLLHLLGRG…VHQLANDPYL (279 aa)). Residues 462 to 470 (LGRGGFSEV) and K485 each bind ATP. Catalysis depends on D586, which acts as the Proton acceptor. S743 is modified (phosphoserine).

This sequence belongs to the protein kinase superfamily. Ser/Thr protein kinase family. As to quaternary structure, heterodimer with TLK2. Mg(2+) serves as cofactor. Widely expressed. Present in fetal placenta, liver, kidney and pancreas but not heart or skeletal muscle. Also found in adult cell lines. Isoform 3 is ubiquitously expressed in all tissues examined.

The protein localises to the nucleus. It catalyses the reaction L-seryl-[protein] + ATP = O-phospho-L-seryl-[protein] + ADP + H(+). The enzyme catalyses L-threonyl-[protein] + ATP = O-phospho-L-threonyl-[protein] + ADP + H(+). Cell-cycle regulated, maximal activity in S-phase. Inactivated by phosphorylation at Ser-743, potentially by CHEK1. Its function is as follows. Rapidly and transiently inhibited by phosphorylation following the generation of DNA double-stranded breaks during S-phase. This is cell cycle checkpoint and ATM-pathway dependent and appears to regulate processes involved in chromatin assembly. Isoform 3 phosphorylates and enhances the stability of the t-SNARE SNAP23, augmenting its assembly with syntaxin. Isoform 3 protects the cells from the ionizing radiation by facilitating the repair of DSBs. In vitro, phosphorylates histone H3 at 'Ser-10'. This Homo sapiens (Human) protein is Serine/threonine-protein kinase tousled-like 1 (TLK1).